The sequence spans 296 residues: Light-independent protochlorophyllide reductase iron-sulfur ATP-binding protein (296 aa).

Residues 39 to 44 (GIGKST) and K68 contribute to the ATP site. S43 is a binding site for Mg(2+). Residues C124 and C158 each contribute to the [4Fe-4S] cluster site. Residue 209 to 210 (NR) coordinates ATP.

Belongs to the NifH/BchL/ChlL family. As to quaternary structure, homodimer. Protochlorophyllide reductase is composed of three subunits; ChlL, ChlN and ChlB. It depends on [4Fe-4S] cluster as a cofactor.

It carries out the reaction chlorophyllide a + oxidized 2[4Fe-4S]-[ferredoxin] + 2 ADP + 2 phosphate = protochlorophyllide a + reduced 2[4Fe-4S]-[ferredoxin] + 2 ATP + 2 H2O. The protein operates within porphyrin-containing compound metabolism; chlorophyll biosynthesis (light-independent). Functionally, component of the dark-operative protochlorophyllide reductase (DPOR) that uses Mg-ATP and reduced ferredoxin to reduce ring D of protochlorophyllide (Pchlide) to form chlorophyllide a (Chlide). This reaction is light-independent. The L component serves as a unique electron donor to the NB-component of the complex, and binds Mg-ATP. The sequence is that of Light-independent protochlorophyllide reductase iron-sulfur ATP-binding protein from Prochlorococcus marinus (strain SARG / CCMP1375 / SS120).